A 190-amino-acid polypeptide reads, in one-letter code: Elongation factor P (190 aa).

The protein belongs to the elongation factor P family.

Its subcellular location is the cytoplasm. It participates in protein biosynthesis; polypeptide chain elongation. Involved in peptide bond synthesis. Stimulates efficient translation and peptide-bond synthesis on native or reconstituted 70S ribosomes in vitro. Probably functions indirectly by altering the affinity of the ribosome for aminoacyl-tRNA, thus increasing their reactivity as acceptors for peptidyl transferase. This Pseudomonas fluorescens (strain ATCC BAA-477 / NRRL B-23932 / Pf-5) protein is Elongation factor P.